A 94-amino-acid chain; its full sequence is Adaptation to cold protein J (94 aa).

In terms of domain architecture, J spans 3–93; the sequence is NHFSVLGIKP…AMRELWDQFY (91 aa). Residues 74-94 are essential for interaction with AtcC; that stretch reads NNVIVTDPNSAMRELWDQFYP.

Interacts via its C-terminal extension with AtcC. Does not interact with AtcA and AtcB.

In terms of biological role, involved in cold adaptation. The J-domain is functional and can stimulate the ATPase activity of the DnaK chaperone. May work as a co-chaperone of the DnaK system to support cold resistance. In Shewanella oneidensis (strain ATCC 700550 / JCM 31522 / CIP 106686 / LMG 19005 / NCIMB 14063 / MR-1), this protein is Adaptation to cold protein J.